Consider the following 127-residue polypeptide: Glycine cleavage system H protein (127 aa).

One can recognise a Lipoyl-binding domain in the interval 22-104 (KVRIGITDFA…YEKAWMIVVE (83 aa)). Lys63 is subject to N6-lipoyllysine.

The protein belongs to the GcvH family. The glycine cleavage system is composed of four proteins: P, T, L and H. It depends on (R)-lipoate as a cofactor.

The glycine cleavage system catalyzes the degradation of glycine. The H protein shuttles the methylamine group of glycine from the P protein to the T protein. In terms of biological role, is also involved in protein lipoylation via its role as an octanoyl/lipoyl carrier protein intermediate. This Bacillus licheniformis (strain ATCC 14580 / DSM 13 / JCM 2505 / CCUG 7422 / NBRC 12200 / NCIMB 9375 / NCTC 10341 / NRRL NRS-1264 / Gibson 46) protein is Glycine cleavage system H protein.